The chain runs to 75 residues: MTEFLFCFSCCIGEQPQPKRRRRIDRSMIGEPMNFVHTAHVGSGDANTGFAMGGSFQDQMKSKGGYTPGISEVAL.

2 S-palmitoyl cysteine lipidation sites follow: cysteine 10 and cysteine 11. One can recognise a CRIB domain in the interval isoleucine 29–glycine 42.

This sequence belongs to the CDC42SE/SPEC family.

Its subcellular location is the cytoplasm. It localises to the cytoskeleton. The protein resides in the cell membrane. Its function is as follows. Probably involved in the organization of the actin cytoskeleton by acting downstream of CDC42, inducing actin filament assembly. The protein is CDC42 small effector protein 2-C (cdc42se2-c) of Xenopus laevis (African clawed frog).